Consider the following 1616-residue polypeptide: S-layer-related protein (1616 aa).

The N-terminal stretch at 1 to 30 (MKSLLRKWNGMMIIALVISLLTPAWGKASA) is a signal peptide. Residues 1115 to 1185 (VKALKLDRGT…GSGTVQATYE (71 aa)) enclose the BIG2 domain. 4 disordered regions span residues 1191 to 1244 (ARVS…DGRN), 1372 to 1455 (NKRN…GRAR), 1523 to 1554 (ARGR…REAG), and 1585 to 1616 (FAGG…ARPC). Over residues 1199 to 1225 (STGGGSDTGSGTGSGSGGGSAGGGGTA) the composition is skewed to gly residues. Basic residues predominate over residues 1372-1387 (NKRNRRLRKLRPKNRK). Over residues 1406–1416 (PPECSASCPPA) the composition is skewed to low complexity. The region spanning 1438–1502 (WSPPRSASPT…ALDPAPAAAD (65 aa)) is the SLH domain. Basic and acidic residues predominate over residues 1536-1554 (RGADTRTDERDAHARREAG). The segment covering 1594-1616 (GRTRGRTLRARPARLPVRKARPC) has biased composition (basic residues).

The protein resides in the secreted. Its subcellular location is the cell wall. It localises to the S-layer. The S-layer is a paracrystalline mono-layered assembly of proteins which coats the surface of bacteria. May play a role in the export of butirosin from the organism. The chain is S-layer-related protein (butB) from Niallia circulans (Bacillus circulans).